Here is a 261-residue protein sequence, read N- to C-terminus: Cathepsin G (261 aa).

Residues 1-18 (MQPLLLLLTFILLQGDEA) form the signal peptide. Residues 19–20 (GK) constitute a propeptide, activation peptide. Residues 21–25 (IIGGR) are important for antimicrobial activity. Positions 21–243 (IIGGREARPH…FMPWIKRTMR (223 aa)) constitute a Peptidase S1 domain. Cys49 and Cys65 form a disulfide bridge. The Charge relay system role is filled by His64. An N-linked (GlcNAc...) asparagine glycan is attached at Asn71. The tract at residues 97–111 (HPDYNPQNIRNDIML) is important for antimicrobial activity. The active-site Charge relay system is Asp108. 2 disulfide bridges follow: Cys142/Cys207 and Cys172/Cys186. Ser201 acts as the Charge relay system in catalysis.

Belongs to the peptidase S1 family. In terms of tissue distribution, in adult, detected only in bone marrow where expression is restricted to a small population of early myeloid cells.

The protein resides in the cell membrane. The protein localises to the cytoplasmic granule. It is found in the secreted. Its subcellular location is the cytoplasm. It localises to the cytosol. The protein resides in the lysosome. The protein localises to the nucleus. The catalysed reaction is Specificity similar to chymotrypsin C.. Inhibited by chymostatin, phenylmethanesulfonyl fluoride and diisopropyl fluorophosphate. Functionally, serine protease with trypsin- and chymotrypsin-like specificity. Also displays antibacterial activity against Gram-negative and Gram-positive bacteria independent of its protease activity. Prefers Phe and Tyr residues in the P1 position of substrates but also cleaves efficiently after Trp and Leu. Shows a preference for negatively charged amino acids in the P2' position and for aliphatic amino acids both upstream and downstream of the cleavage site. Required for recruitment and activation of platelets which is mediated by the F2RL3/PAR4 platelet receptor. Binds reversibly to and stimulates B cells and CD4(+) and CD8(+) T cells. Also binds reversibly to natural killer (NK) cells and enhances NK cell cytotoxicity through its protease activity. Cleaves complement C3. Cleaves vimentin. Cleaves thrombin receptor F2R/PAR1. Cleaves the synovial mucin-type protein PRG4/lubricin. Cleaves and activates IL36G which promotes expression of chemokines CXCL1 and CXLC8 in keratinocytes. Cleaves IL33 into mature forms which have greater activity than the unprocessed form. Cleaves coagulation factor F8 to produce a partially activated form. Also cleaves and activates coagulation factor F10. Cleaves leukocyte cell surface protein SPN/CD43 to release its extracellular domain and trigger its intramembrane proteolysis by gamma-secretase, releasing the CD43 cytoplasmic tail chain (CD43-ct) which translocates to the nucleus. During apoptosis, cleaves SMARCA2/BRM to produce a 160 kDa cleavage product which localizes to the cytosol. Cleaves MBP in B cell lysosomes at '221-Phe-|-Lys-222', degrading the major immunogenic MBP epitope and preventing the activation of MBP-specific autoreactive T cells. Cleaves annexin ANXA1 and antimicrobial peptide CAMP to produce peptides which act on neutrophil N-formyl peptide receptors to enhance the release of CXCL2. Acts as a ligand for the N-formyl peptide receptor FPR1, enhancing phagocyte chemotaxis. Has antibacterial activity against the Gram-negative bacteria N.gonorrhoeae and P.aeruginosa. Likely to act against N.gonorrhoeae by interacting with N.gonorrhoeae penA/PBP2. Exhibits potent antimicrobial activity against the Gram-positive bacterium L.monocytogenes. Has antibacterial activity against the Gram-positive bacterium S.aureus and degrades S.aureus biofilms, allowing polymorphonuclear leukocytes to penetrate the biofilm and phagocytose bacteria. Has antibacterial activity against M.tuberculosis. Induces platelet aggregation which is strongly potentiated in the presence of ELANE. The protein is Cathepsin G (Ctsg) of Mus musculus (Mouse).